Here is a 335-residue protein sequence, read N- to C-terminus: Large ribosomal subunit protein uL3 (335 aa).

The segment at 1–20 is disordered; that stretch reads MATIHRPRRGSLAFSPRKRA.

This sequence belongs to the universal ribosomal protein uL3 family. As to quaternary structure, part of the 50S ribosomal subunit. Forms a cluster with proteins L14 and L24e.

One of the primary rRNA binding proteins, it binds directly near the 3'-end of the 23S rRNA, where it nucleates assembly of the 50S subunit. The chain is Large ribosomal subunit protein uL3 (rpl3) from Methanothrix harundinacea (strain 6Ac) (Methanosaeta harundinacea).